A 290-amino-acid polypeptide reads, in one-letter code: Arylamine N-acetyltransferase 1 (290 aa).

M1 bears the N-acetylmethionine mark. C68 (acyl-thioester intermediate) is an active-site residue. Positions 103 and 104 each coordinate CoA. Substrate is bound at residue I106–H107. Residues H107 and D122 contribute to the active site. Residues Y208 and S214 each contribute to the CoA site.

It belongs to the arylamine N-acetyltransferase family.

It localises to the cytoplasm. The catalysed reaction is an arylamine + acetyl-CoA = an N-acetylarylamine + CoA. In terms of biological role, participates in the detoxification of a plethora of hydrazine and arylamine drugs. Catalyzes the N- or O-acetylation of various arylamine and heterocyclic amine substrates and is able to bioactivate several known carcinogens. This Homo sapiens (Human) protein is Arylamine N-acetyltransferase 1 (NAT1).